Reading from the N-terminus, the 327-residue chain is Nucleotide-binding protein CYB_0992 (327 aa).

ATP is bound at residue 12–19 (GLTGAGKT).

The protein belongs to the RapZ-like family.

In terms of biological role, displays ATPase and GTPase activities. In Synechococcus sp. (strain JA-2-3B'a(2-13)) (Cyanobacteria bacterium Yellowstone B-Prime), this protein is Nucleotide-binding protein CYB_0992.